The chain runs to 113 residues: UPF0122 protein Sez_1013 (113 aa).

The protein belongs to the UPF0122 family.

In terms of biological role, might take part in the signal recognition particle (SRP) pathway. This is inferred from the conservation of its genetic proximity to ftsY/ffh. May be a regulatory protein. The sequence is that of UPF0122 protein Sez_1013 from Streptococcus equi subsp. zooepidemicus (strain MGCS10565).